Here is a 567-residue protein sequence, read N- to C-terminus: MSTSVFNRRWAALLLEALTRHGVRHICIAPGSRSTPLTLAAAANPSLVCHTHFDERGLGHLALGLAKASTEPVAVIVTSGTAVANLYPALIEAGLTGERLILLTADRPPELIDCGANQAIRQQGLFASHPTLSVNLPRPTPDISARWLVSTLDSAMAQLQHGALHINCPFAEPLYGGDEQQYADWSASLGDWWQDCHPWLRQTCYPPSLYQPLAQQADWFFWRQKRGVVIAGRMGAEEGRQLTAWAAMLGWPLIGDVLSQTGQPLPCADLWLAHPRAQETLAQAQIVLQFGSSLTSKRLLQWQTACQPQEYWLVDSAPGRLDPANHRGRRIICPVGEWLSRHPAQRRTPWATELAAYSESAQAQVIETLAGQFSEAAVAHQLAELLPDNGQLFVGNSLIIRLIDALGQLPAGYPVYSNRGASGIDGLLSTAAGVQRATAKPTLAIVGDLSALYDLNALALLRQSSAPMVLLVINNNGGQIFSLLPTPEAERQRFYCMPQDVNFEHAAVMFSLGYARPNSWPQLREHVHQCWLRGGTTLIEVQVPPSQGAETLQQLVQQVTLIPQVAP.

It belongs to the TPP enzyme family. MenD subfamily. In terms of assembly, homodimer. Mg(2+) serves as cofactor. It depends on Mn(2+) as a cofactor. Requires thiamine diphosphate as cofactor.

It carries out the reaction isochorismate + 2-oxoglutarate + H(+) = 5-enolpyruvoyl-6-hydroxy-2-succinyl-cyclohex-3-ene-1-carboxylate + CO2. It participates in quinol/quinone metabolism; 1,4-dihydroxy-2-naphthoate biosynthesis; 1,4-dihydroxy-2-naphthoate from chorismate: step 2/7. It functions in the pathway quinol/quinone metabolism; menaquinone biosynthesis. Its function is as follows. Catalyzes the thiamine diphosphate-dependent decarboxylation of 2-oxoglutarate and the subsequent addition of the resulting succinic semialdehyde-thiamine pyrophosphate anion to isochorismate to yield 2-succinyl-5-enolpyruvyl-6-hydroxy-3-cyclohexene-1-carboxylate (SEPHCHC). This chain is 2-succinyl-5-enolpyruvyl-6-hydroxy-3-cyclohexene-1-carboxylate synthase, found in Yersinia pseudotuberculosis serotype O:1b (strain IP 31758).